A 250-amino-acid polypeptide reads, in one-letter code: UPF0014 membrane protein YjkA (250 aa).

A run of 6 helical transmembrane segments spans residues 3–23 (YLSLSLTMIFVLIALFLSKSF), 32–52 (IIATIRAAVQLLIIGYVLSLI), 57–77 (HPVFILLMVLLMLAVAAQNVI), 91–111 (FAALAIVEIVTQGILLSLHII), 117–137 (YVIPISGMVIGNSMVLSSLFL), and 214–234 (LLIVFTTMASAALTCVILSVL).

Belongs to the UPF0014 family.

It localises to the cell membrane. The protein is UPF0014 membrane protein YjkA (yjkA) of Bacillus subtilis (strain 168).